The primary structure comprises 692 residues: PTS system glucoside-specific EIICBA component (692 aa).

The 425-residue stretch at 6-430 (KKFFGQLQRI…LNLKTPGRED (425 aa)) folds into the PTS EIIC type-1 domain. 10 helical membrane-spanning segments follow: residues 15-35 (IGKALMLPVAILPAAGILLTF), 84-104 (LGLAGGDGVAGIAALVGYLIM), 140-160 (LVLGIPTLQTGVFGGIIIGAL), 185-205 (FVPIITSLVAIVTGIVLSFVW), 215-235 (LSNFLLGKNLALTTFIFGIIE), 287-307 (AFTTGKYPFMMFGLPAAAFAI), 318-338 (VVGGLMLSAALTSFLTGITEP), 344-364 (LFVAPILYVAHVILAGTSFLI), 370-390 (VQIGMTFSGGFIDYILYGLLS), and 398-418 (LVIPVGIAYALIYYFLFTFLI). The PTS EIIB type-1 domain occupies 441–522 (SELPFEVLEA…QQIMDGKITS (82 aa)). The active-site Phosphocysteine intermediate; for EIIB activity is Cys-463. Residues 563–667 (DKVFSAKMMG…DTITPIIITN (105 aa)) enclose the PTS EIIA type-1 domain. His-615 acts as the Tele-phosphohistidine intermediate; for EIIA activity in catalysis.

It is found in the cell membrane. With respect to regulation, inhibited by methyl alpha-D-glucoside, methyl beta-D-glucoside, p-nitrophenyl alpha-D-glucoside, o-nitrophenyl beta-D-glucoside and salicin, but not by 2-deoxyglucose. The phosphoenolpyruvate-dependent sugar phosphotransferase system (sugar PTS), a major carbohydrate active -transport system, catalyzes the phosphorylation of incoming sugar substrates concomitantly with their translocation across the cell membrane. This system is involved in alpha- and beta-glucoside transport. Can also transport glucose, but not galactose, fructose, mannose, cellobiose, sucrose, maltose, lactose, melibiose and trehalose, as well as N-acetylglucosamine. The protein is PTS system glucoside-specific EIICBA component (glcB) of Staphylococcus carnosus (strain TM300).